A 339-amino-acid polypeptide reads, in one-letter code: Phenylalanine--tRNA ligase alpha subunit (339 aa).

Mg(2+) is bound at residue Glu250.

Belongs to the class-II aminoacyl-tRNA synthetase family. Phe-tRNA synthetase alpha subunit type 1 subfamily. Tetramer of two alpha and two beta subunits. The cofactor is Mg(2+).

The protein resides in the cytoplasm. The catalysed reaction is tRNA(Phe) + L-phenylalanine + ATP = L-phenylalanyl-tRNA(Phe) + AMP + diphosphate + H(+). The chain is Phenylalanine--tRNA ligase alpha subunit from Bacteroides fragilis (strain ATCC 25285 / DSM 2151 / CCUG 4856 / JCM 11019 / LMG 10263 / NCTC 9343 / Onslow / VPI 2553 / EN-2).